Here is a 498-residue protein sequence, read N- to C-terminus: Glycerol kinase (498 aa).

Thr12 is a binding site for ADP. ATP-binding residues include Thr12, Thr13, and Ser14. Thr12 is a sn-glycerol 3-phosphate binding site. Arg16 lines the ADP pocket. Positions 82, 83, 134, and 244 each coordinate sn-glycerol 3-phosphate. The glycerol site is built by Arg82, Glu83, Tyr134, Asp244, and Gln245. Residues Thr266 and Gly310 each coordinate ADP. ATP contacts are provided by Thr266, Gly310, Gln314, and Gly411. The ADP site is built by Gly411 and Asn415.

The protein belongs to the FGGY kinase family.

It carries out the reaction glycerol + ATP = sn-glycerol 3-phosphate + ADP + H(+). It functions in the pathway polyol metabolism; glycerol degradation via glycerol kinase pathway; sn-glycerol 3-phosphate from glycerol: step 1/1. With respect to regulation, inhibited by fructose 1,6-bisphosphate (FBP). In terms of biological role, key enzyme in the regulation of glycerol uptake and metabolism. Catalyzes the phosphorylation of glycerol to yield sn-glycerol 3-phosphate. This is Glycerol kinase from Chloroflexus aurantiacus (strain ATCC 29364 / DSM 637 / Y-400-fl).